The following is a 1593-amino-acid chain: Nischarin (1593 aa).

A necessary for binding to phosphoinositide-3-P; not sufficient for targeting to endosomes region spans residues 1-134; the sequence is MAAATLSFGP…GVTAALAEEL (134 aa). The PX domain maps to 12-122; the sequence is REAEPAKEAR…AHFLHFHLYE (111 aa). Residues 121–695 are necessary for homooligomerization and targeting to endosomes; that stretch reads YEVNGVTAAL…ERLALEWALG (575 aa). An interaction with PAK1 region spans residues 246–869; it reads MSVRFSATSM…LVYSDKRMVQ (624 aa). 6 LRR repeats span residues 290 to 311, 313 to 334, 335 to 356, 358 to 379, 380 to 401, and 405 to 426; these read ALTT…VKLI, KIEY…QHLY, NLVH…HTKL, NVKT…HKLY, SLVN…KSIG, and CLER…RTKV. A compositionally biased stretch (basic and acidic residues) spans 466–480; sequence SKLSNTEKKAGEDFR. The disordered stretch occupies residues 466–499; the sequence is SKLSNTEKKAGEDFRLPPAPCIRPGGSPPAAPAS. The segment covering 482–496 has biased composition (pro residues); sequence PPAPCIRPGGSPPAA. 3 positions are modified to phosphoserine: Ser-543, Ser-545, and Ser-548. Positions 624 to 694 form a coiled coil; the sequence is IEAANQREEA…EERLALEWAL (71 aa). The disordered stretch occupies residues 629–687; that stretch reads QREEAHGEQGEEEEEEEEEEDVAENRYFEMGPPDAEEEEGSGQGEEDEEDEDEEAEEER. Acidic residues-rich tracts occupy residues 638–650 and 662–685; these read GEEE…EEDV and DAEE…EAEE. An interaction with LIMK region spans residues 661 to 869; that stretch reads PDAEEEEGSG…LVYSDKRMVQ (209 aa). The interval 709–807 is interaction with ITGA5; that stretch reads KVLWCFLIHV…ANLHEFHADL (99 aa). The interval 1016–1185 is disordered; the sequence is NPSAKPRNQP…PAGGPAPAEA (170 aa). Low complexity-rich tracts occupy residues 1038–1069 and 1081–1158; these read ETPA…LAPV and AEAP…APAP. A run of 10 repeats spans residues 1081–1086, 1087–1092, 1093–1098, 1099–1104, 1105–1110, 1111–1116, 1123–1128, 1129–1134, 1135–1140, and 1141–1146. Positions 1081-1146 are 10 X 6 AA tandem repeat of A-E-A-P-A-A; sequence AEAPAAAEAP…APAAAEAPAA (66 aa). Positions 1159–1179 are enriched in pro residues; it reads NQAPAPARGPAPARGPAPAGG. Thr-1371 bears the Phosphothreonine mark. The residue at position 1373 (Ser-1373) is a Phosphoserine.

In terms of assembly, homooligomer. Interacts with GRB2. Interacts with PIK3R1; probably associates with the PI3-kinase complex. Interacts with IRS4. Found in a complex with ITGA5 and PAK1. Found in a complex with LIMK1 and PAK1. Interacts with ITGA5 (via cytoplasmic domain); this interaction is direct. Interacts with PAK1 (via kinase domain); this interaction is direct and is increased upon activation of PAK1. Interacts with LIMK1 (via PDZ and kinase domain); this interaction is direct. Interacts with LIMK2; this interaction depends on LIMK2 activity. Interacts with RAC1 (activated state). Interacts with STK11; this interaction may increase STK11 activity. Highly expressed in brain and kidney. Moderately expressed in heart, liver, lung and skeletal muscle. Not detected in spleen and testis.

The protein resides in the cell membrane. It is found in the cytoplasm. The protein localises to the early endosome. It localises to the recycling endosome. Its function is as follows. Acts either as the functional imidazoline-1 receptor (I1R) candidate or as a membrane-associated mediator of the I1R signaling. Binds numerous imidazoline ligands that induces initiation of cell-signaling cascades triggering to cell survival, growth and migration. Its activation by the agonist rilmenidine induces an increase in phosphorylation of mitogen-activated protein kinases MAPK1 and MAPK3 in rostral ventrolateral medulla (RVLM) neurons that exhibited rilmenidine-evoked hypotension. Blocking its activation with efaroxan abolished rilmenidine-induced mitogen-activated protein kinase phosphorylation in RVLM neurons. Acts as a modulator of Rac-regulated signal transduction pathways. Suppresses Rac1-stimulated cell migration by interacting with PAK1 and inhibiting its kinase activity. Also blocks Pak-independent Rac signaling by interacting with RAC1 and inhibiting Rac1-stimulated NF-kB response element and cyclin D1 promoter activation. Also inhibits LIMK1 kinase activity by reducing LIMK1 'Tyr-508' phosphorylation. Inhibits Rac-induced cell migration and invasion in breast and colon epithelial cells. Inhibits lamellipodia formation, when overexpressed. Plays a role in protection against apoptosis. Involved in association with IRS4 in the enhancement of insulin activation of MAPK1 and MAPK3. When overexpressed, induces a redistribution of cell surface ITGA5 integrin to intracellular endosomal structures. This is Nischarin (Nisch) from Mus musculus (Mouse).